Consider the following 119-residue polypeptide: Large ribosomal subunit protein bL20 (119 aa).

The protein belongs to the bacterial ribosomal protein bL20 family.

Its function is as follows. Binds directly to 23S ribosomal RNA and is necessary for the in vitro assembly process of the 50S ribosomal subunit. It is not involved in the protein synthesizing functions of that subunit. This Dichelobacter nodosus (strain VCS1703A) protein is Large ribosomal subunit protein bL20.